The sequence spans 212 residues: 2-C-methyl-D-erythritol 4-phosphate cytidylyltransferase (212 aa).

Belongs to the IspD/TarI cytidylyltransferase family. IspD subfamily.

It catalyses the reaction 2-C-methyl-D-erythritol 4-phosphate + CTP + H(+) = 4-CDP-2-C-methyl-D-erythritol + diphosphate. Its pathway is isoprenoid biosynthesis; isopentenyl diphosphate biosynthesis via DXP pathway; isopentenyl diphosphate from 1-deoxy-D-xylulose 5-phosphate: step 2/6. Its function is as follows. Catalyzes the formation of 4-diphosphocytidyl-2-C-methyl-D-erythritol from CTP and 2-C-methyl-D-erythritol 4-phosphate (MEP). This chain is 2-C-methyl-D-erythritol 4-phosphate cytidylyltransferase, found in Chlamydia caviae (strain ATCC VR-813 / DSM 19441 / 03DC25 / GPIC) (Chlamydophila caviae).